Reading from the N-terminus, the 131-residue chain is Small ribosomal subunit protein uS11 (131 aa).

This sequence belongs to the universal ribosomal protein uS11 family. Part of the 30S ribosomal subunit. Interacts with proteins S7 and S18. Binds to IF-3.

In terms of biological role, located on the platform of the 30S subunit, it bridges several disparate RNA helices of the 16S rRNA. Forms part of the Shine-Dalgarno cleft in the 70S ribosome. In Neisseria gonorrhoeae (strain ATCC 700825 / FA 1090), this protein is Small ribosomal subunit protein uS11.